A 387-amino-acid chain; its full sequence is Formate-dependent phosphoribosylglycinamide formyltransferase (387 aa).

Residues 21 to 22 (EL) and Glu-81 contribute to the N(1)-(5-phospho-beta-D-ribosyl)glycinamide site. ATP is bound by residues Arg-113, Lys-154, 159-164 (SSGHGQ), 193-196 (EEFI), and Glu-201. The ATP-grasp domain occupies 118 to 306 (TFAAEEVGVK…EFALHLRAVL (189 aa)). Residues Glu-265 and Glu-277 each coordinate Mg(2+). Residues Asp-284, Lys-352, and 359-360 (RR) contribute to the N(1)-(5-phospho-beta-D-ribosyl)glycinamide site.

It belongs to the PurK/PurT family. As to quaternary structure, homodimer.

The catalysed reaction is N(1)-(5-phospho-beta-D-ribosyl)glycinamide + formate + ATP = N(2)-formyl-N(1)-(5-phospho-beta-D-ribosyl)glycinamide + ADP + phosphate + H(+). The protein operates within purine metabolism; IMP biosynthesis via de novo pathway; N(2)-formyl-N(1)-(5-phospho-D-ribosyl)glycinamide from N(1)-(5-phospho-D-ribosyl)glycinamide (formate route): step 1/1. Its function is as follows. Involved in the de novo purine biosynthesis. Catalyzes the transfer of formate to 5-phospho-ribosyl-glycinamide (GAR), producing 5-phospho-ribosyl-N-formylglycinamide (FGAR). Formate is provided by PurU via hydrolysis of 10-formyl-tetrahydrofolate. This chain is Formate-dependent phosphoribosylglycinamide formyltransferase, found in Wolinella succinogenes (strain ATCC 29543 / DSM 1740 / CCUG 13145 / JCM 31913 / LMG 7466 / NCTC 11488 / FDC 602W) (Vibrio succinogenes).